Here is a 258-residue protein sequence, read N- to C-terminus: Ribosomal RNA small subunit methyltransferase J (258 aa).

S-adenosyl-L-methionine contacts are provided by residues 111–112 (RD), 127–128 (ER), and D179.

The protein belongs to the methyltransferase superfamily. RsmJ family.

The protein resides in the cytoplasm. It catalyses the reaction guanosine(1516) in 16S rRNA + S-adenosyl-L-methionine = N(2)-methylguanosine(1516) in 16S rRNA + S-adenosyl-L-homocysteine + H(+). Specifically methylates the guanosine in position 1516 of 16S rRNA. This Alteromonas mediterranea (strain DSM 17117 / CIP 110805 / LMG 28347 / Deep ecotype) protein is Ribosomal RNA small subunit methyltransferase J.